The chain runs to 99 residues: Leydig cell tumor 10 kDa protein homolog (99 aa).

Positions 1-37 (MAQGQRKFQARKPAKSKTAATASEKNRGPRKGGRVIA) are disordered. Residues 28–37 (GPRKGGRVIA) are compositionally biased toward basic residues.

Belongs to the UPF0390 family.

Its function is as follows. May have a potential role in hypercalcemia of malignancy. This Pongo abelii (Sumatran orangutan) protein is Leydig cell tumor 10 kDa protein homolog.